The chain runs to 433 residues: GTPase Obg (433 aa).

Residues 2-160 (PTFVDQTKIE…RVLRLELKLL (159 aa)) enclose the Obg domain. The 174-residue stretch at 161 to 334 (ADVGLVGFPS…LMNDTATLVE (174 aa)) folds into the OBG-type G domain. GTP contacts are provided by residues 167 to 174 (GFPSVGKS), 192 to 196 (FTTLT), 214 to 217 (DLPG), 284 to 287 (SQMD), and 315 to 317 (SSV). Mg(2+)-binding residues include Ser-174 and Thr-194. An OCT domain is found at 355–433 (YKAPQRNEFM…IGKFVFEFVQ (79 aa)).

It belongs to the TRAFAC class OBG-HflX-like GTPase superfamily. OBG GTPase family. In terms of assembly, monomer. Mg(2+) serves as cofactor.

It localises to the cytoplasm. In terms of biological role, an essential GTPase which binds GTP, GDP and possibly (p)ppGpp with moderate affinity, with high nucleotide exchange rates and a fairly low GTP hydrolysis rate. Plays a role in control of the cell cycle, stress response, ribosome biogenesis and in those bacteria that undergo differentiation, in morphogenesis control. The chain is GTPase Obg from Lactobacillus acidophilus (strain ATCC 700396 / NCK56 / N2 / NCFM).